The sequence spans 377 residues: Histone deacetylase 8 (377 aa).

Residues 14 to 324 (LPPVYIYSPE…WTYLTGVILG (311 aa)) form a histone deacetylase region. Ser-39 is subject to Phosphoserine. Asp-101 contributes to the substrate binding site. The active-site Proton acceptor is the His-143. Gly-151 contacts substrate. Residues Asp-178, His-180, and Asp-267 each coordinate a divalent metal cation. Tyr-306 is a binding site for substrate.

It belongs to the histone deacetylase family. HD type 1 subfamily. Interacts with CBFA2T3. Interacts with phosphorylated SMG5/EST1B; this interaction protects SMG5 from ubiquitin-mediated degradation. Associates with alpha-SMA (smooth muscle alpha-actin). A divalent metal cation is required as a cofactor. Phosphorylated by PKA on serine 39. Phosphorylation reduces deacetylase activity observed preferentially on histones H3 and H4.

It is found in the nucleus. The protein localises to the chromosome. It localises to the cytoplasm. It catalyses the reaction N(6)-acetyl-L-lysyl-[histone] + H2O = L-lysyl-[histone] + acetate. It carries out the reaction N(6)-acetyl-L-lysyl-[protein] + H2O = L-lysyl-[protein] + acetate. The catalysed reaction is N(6)-(2E)-butenoyl-L-lysyl-[protein] + H2O = (2E)-2-butenoate + L-lysyl-[protein]. With respect to regulation, its activity is inhibited by trichostatin A (TSA) and butyrate, 2 well known histone deacetylase inhibitors. histone deacetylase inhibitor. Its function is as follows. Histone deacetylase that catalyzes the deacetylation of lysine residues on the N-terminal part of the core histones (H2A, H2B, H3 and H4). Histone deacetylation gives a tag for epigenetic repression and plays an important role in transcriptional regulation, cell cycle progression and developmental events. Histone deacetylases act via the formation of large multiprotein complexes. Also involved in the deacetylation of cohesin complex protein SMC3 regulating release of cohesin complexes from chromatin. May play a role in smooth muscle cell contractility. In addition to protein deacetylase activity, also has protein-lysine deacylase activity: acts as a protein decrotonylase by mediating decrotonylation ((2E)-butenoyl) of histones. In Mus musculus (Mouse), this protein is Histone deacetylase 8 (Hdac8).